The sequence spans 425 residues: Glutamate-1-semialdehyde 2,1-aminomutase (425 aa).

Lys-266 is subject to N6-(pyridoxal phosphate)lysine.

The protein belongs to the class-III pyridoxal-phosphate-dependent aminotransferase family. HemL subfamily. As to quaternary structure, homodimer. Pyridoxal 5'-phosphate serves as cofactor.

It localises to the cytoplasm. It catalyses the reaction (S)-4-amino-5-oxopentanoate = 5-aminolevulinate. Its pathway is porphyrin-containing compound metabolism; protoporphyrin-IX biosynthesis; 5-aminolevulinate from L-glutamyl-tRNA(Glu): step 2/2. The chain is Glutamate-1-semialdehyde 2,1-aminomutase from Nitratidesulfovibrio vulgaris (strain DSM 19637 / Miyazaki F) (Desulfovibrio vulgaris).